A 433-amino-acid polypeptide reads, in one-letter code: Phosphoribosylamine--glycine ligase (433 aa).

Positions 111-317 (EFMARNNIKG…FVDICEAIVD (207 aa)) constitute an ATP-grasp domain. 138–194 (EDNPDVVVKPAGLTGGKGVKVMGEHMHTLEEAREYVKSVLEHDRVVIEERLKGEEVT) provides a ligand contact to ATP. The Mg(2+) site is built by glutamine 275, glutamate 287, and asparagine 289. The Mn(2+) site is built by glutamine 275, glutamate 287, and asparagine 289.

The protein belongs to the GARS family. It depends on Mg(2+) as a cofactor. The cofactor is Mn(2+).

It carries out the reaction 5-phospho-beta-D-ribosylamine + glycine + ATP = N(1)-(5-phospho-beta-D-ribosyl)glycinamide + ADP + phosphate + H(+). It functions in the pathway purine metabolism; IMP biosynthesis via de novo pathway; N(1)-(5-phospho-D-ribosyl)glycinamide from 5-phospho-alpha-D-ribose 1-diphosphate: step 2/2. This Methanocella arvoryzae (strain DSM 22066 / NBRC 105507 / MRE50) protein is Phosphoribosylamine--glycine ligase.